An 817-amino-acid chain; its full sequence is Neurabin-2 (817 aa).

Actin-binding regions lie at residues 1-154 and 164-283; these read MMKT…FERS and EAAA…QHRV. The disordered stretch occupies residues 1–165; sequence MMKTEPRGPG…PAAAGGDKEA (165 aa). Phosphoserine is present on residues Ser15 and Ser17. Basic residues predominate over residues 44-58; the sequence is GAHHKKYGSNVHRIK. Ser94, Ser100, and Ser116 each carry phosphoserine. The interaction with D(2) dopamine receptor stretch occupies residues 100 to 371; sequence SLNENVDHSA…PERGVGNGRA (272 aa). Pro residues predominate over residues 131-141; the sequence is SAQPAPPPHPP. The tract at residues 169–255 is interaction with ADRA2A, ADRA2B and ADRA2C; it reads RLLRQERAGL…KRSRVFQPPP (87 aa). A Phosphoserine modification is found at Ser192. Residue Thr193 is modified to Phosphothreonine. The residue at position 205 (Ser205) is a Phosphoserine. Thr207 carries the post-translational modification Phosphothreonine. Positions 216 to 447 are disordered; it reads EKADSRTGLH…SEEEDPAPSR (232 aa). The segment covering 252-261 has biased composition (pro residues); that stretch reads QPPPPPPPAP. The segment covering 291 to 302 has biased composition (basic and acidic residues); it reads KPREVRKIKPVE. The span at 333–342 shows a compositional bias: low complexity; the sequence is STVATAASPA. Over residues 344–356 the composition is skewed to basic and acidic residues; the sequence is EEPKAQAAPEKEA. Positions 410–425 are enriched in acidic residues; the sequence is LEEDDEDDEEDGEPPY. Positions 417–494 are interaction with protein phosphatase 1; that stretch reads DEEDGEPPYE…LEKRVERLEL (78 aa). Residue Ser438 is modified to Phosphoserine. The PP1-binding motif signature appears at 447-451; that stretch reads RKIHF. Residues 480–525 are interaction with RGS2; it reads SAEYELEKRVERLELFPVELEKDSEGLGISIIGMGAGADMGLEKLG. The region spanning 496 to 584 is the PDZ domain; it reads PVELEKDSEG…RVRFMIGRER (89 aa). Positions 595–816 are interaction with TGN38; it reads IQQTLEQERW…NLQTLRNSNS (222 aa). Residue Ser658 is modified to Phosphoserine. The stretch at 671-788 forms a coiled coil; that stretch reads FKELQIKHAV…QRRVLEESEL (118 aa).

As to quaternary structure, interacts with DCLK2. Possibly exists as a homodimer, homotrimer or a homotetramer. Interacts with F-actin, PPP1CA, neurabin-1, TGN38 and D(2) dopamine receptor. Interacts with RGS1, RGS2, RGS4, RGS19 and ADRA1B, ADRA2A, ADRA2B, ADRA2C, CDKN2A, PPP1R2, RASGFR1 and TIAM1. Interacts (via C-terminus) with SPATA13 (via C-terminal tail). Interacts with ADRA2B. Post-translationally, stimulation of D1 (but not D2) dopamine receptors induces Ser-94 phosphorylation. Dephosphorylation of Ser-94 is mediated mainly by PP1 and to a lesser extent by PP2A. Phosphorylation of spinophilin disrupts its association with F-actin, but does not affect its binding to PP1.

The protein resides in the cytoplasm. It localises to the cytoskeleton. It is found in the nucleus. Its subcellular location is the cell projection. The protein localises to the dendritic spine. The protein resides in the postsynaptic density. It localises to the synapse. It is found in the cell junction. Its subcellular location is the adherens junction. The protein localises to the cell membrane. The protein resides in the lamellipodium. It localises to the filopodium. It is found in the ruffle membrane. Functionally, seems to act as a scaffold protein in multiple signaling pathways. Modulates excitatory synaptic transmission and dendritic spine morphology. Binds to actin filaments (F-actin) and shows cross-linking activity. Binds along the sides of the F-actin. May play an important role in linking the actin cytoskeleton to the plasma membrane at the synaptic junction. Believed to target protein phosphatase 1/PP1 to dendritic spines, which are rich in F-actin, and regulates its specificity toward ion channels and other substrates, such as AMPA-type and NMDA-type glutamate receptors. Plays a role in regulation of G-protein coupled receptor signaling, including dopamine D2 receptors and alpha-adrenergic receptors. May establish a signaling complex for dopaminergic neurotransmission through D2 receptors by linking receptors downstream signaling molecules and the actin cytoskeleton. Binds to ADRA1B and RGS2 and mediates regulation of ADRA1B signaling. May confer to Rac signaling specificity by binding to both, RacGEFs and Rac effector proteins. Probably regulates p70 S6 kinase activity by forming a complex with TIAM1. Required for hepatocyte growth factor (HGF)-induced cell migration. The polypeptide is Neurabin-2 (PPP1R9B) (Homo sapiens (Human)).